The sequence spans 914 residues: TRPM8 channel-associated factor 3 (914 aa).

In terms of domain architecture, Peptidase M60 spans 533–832; it reads NSWVSTGLYL…TYLQLQEGFG (300 aa).

The protein belongs to the TCAF family.

Functionally, may play a role in the regulation of the cation channel TRPM8 activity. This Rattus norvegicus (Rat) protein is TRPM8 channel-associated factor 3.